A 310-amino-acid polypeptide reads, in one-letter code: uncharacterized protein (310 aa).

Residue histidine 239 is part of the active site.

The protein belongs to the IUNH family.

It is found in the cytoplasm. It localises to the nucleus. This is an uncharacterized protein from Schizosaccharomyces pombe (strain 972 / ATCC 24843) (Fission yeast).